We begin with the raw amino-acid sequence, 116 residues long: Methionine-R-sulfoxide reductase B1 (116 aa).

One can recognise a MsrB domain in the interval 1–106 (MSFCSFFGGE…FSSSLKFVPK (106 aa)). Residues C23, C26, C71, and C74 each coordinate Zn(2+). U95 acts as the Nucleophile in catalysis. U95 is a non-standard amino acid (selenocysteine).

Belongs to the MsrB Met sulfoxide reductase family. Zn(2+) is required as a cofactor. Truncated MSRB1/SEPX1 proteins produced by failed UGA/Sec decoding are ubiquitinated by the CRL2(FEM1C) E3 ubiquitin-protein ligase complex.

It localises to the cytoplasm. Its subcellular location is the nucleus. The protein resides in the cytoskeleton. It catalyses the reaction L-methionyl-[protein] + [thioredoxin]-disulfide + H2O = L-methionyl-(R)-S-oxide-[protein] + [thioredoxin]-dithiol. The catalysed reaction is [thioredoxin]-disulfide + L-methionine + H2O = L-methionine (R)-S-oxide + [thioredoxin]-dithiol. Its function is as follows. Methionine-sulfoxide reductase that specifically reduces methionine (R)-sulfoxide back to methionine. While in many cases, methionine oxidation is the result of random oxidation following oxidative stress, methionine oxidation is also a post-translational modification that takes place on specific residue. Acts as a regulator of actin assembly by reducing methionine (R)-sulfoxide mediated by MICALs (MICAL1, MICAL2 or MICAL3) on actin, thereby promoting filament repolymerization. Plays a role in innate immunity by reducing oxidized actin, leading to actin repolymerization in macrophages. The protein is Methionine-R-sulfoxide reductase B1 (Msrb1) of Mus musculus (Mouse).